Reading from the N-terminus, the 427-residue chain is Glutamate-1-semialdehyde 2,1-aminomutase (427 aa).

N6-(pyridoxal phosphate)lysine is present on K266.

It belongs to the class-III pyridoxal-phosphate-dependent aminotransferase family. HemL subfamily. As to quaternary structure, homodimer. Pyridoxal 5'-phosphate serves as cofactor.

It localises to the cytoplasm. It carries out the reaction (S)-4-amino-5-oxopentanoate = 5-aminolevulinate. It functions in the pathway porphyrin-containing compound metabolism; protoporphyrin-IX biosynthesis; 5-aminolevulinate from L-glutamyl-tRNA(Glu): step 2/2. This is Glutamate-1-semialdehyde 2,1-aminomutase from Dechloromonas aromatica (strain RCB).